A 349-amino-acid chain; its full sequence is Methylglutaconyl-CoA hydratase 1, mitochondrial (349 aa).

The transit peptide at 1-37 (MPPVSRILSYAPRVAIRPSSQLARPARAFAVGTVRYY) directs the protein to the mitochondrion.

It belongs to the enoyl-CoA hydratase/isomerase family. Homohexamer.

The protein resides in the mitochondrion. It carries out the reaction (3S)-3-hydroxy-3-methylglutaryl-CoA = 3-methyl-(2E)-glutaconyl-CoA + H2O. It participates in amino-acid degradation; L-leucine degradation; (S)-3-hydroxy-3-methylglutaryl-CoA from 3-isovaleryl-CoA: step 3/3. 3-methylglutaconyl-CoA hydratase that catalyzes the fifth step in the leucine degradation pathway, the reversible hydration of 3-methylglutaconyl-CoA (3-MG-CoA) to 3-hydroxy-3-methylglutaryl-CoA (HMG-CoA). Involved in vegetative growth, conidiation and in the stress response. Controls mitochondrial morphology and mitophagy, which are critical for the infectious growth of the pathogen. This is Methylglutaconyl-CoA hydratase 1, mitochondrial from Pyricularia oryzae (strain 70-15 / ATCC MYA-4617 / FGSC 8958) (Rice blast fungus).